We begin with the raw amino-acid sequence, 450 residues long: tRNA modification GTPase MnmE (450 aa).

3 residues coordinate (6S)-5-formyl-5,6,7,8-tetrahydrofolate: Arg23, Glu79, and Lys118. Residues 214–374 enclose the TrmE-type G domain; that stretch reads GITLILVGKP…LKEHILNKVG (161 aa). Asn224 serves as a coordination point for K(+). GTP-binding positions include 224-229, 243-249, and 268-271; these read NAGKSS, TSIAGTT, and DTAG. Ser228 provides a ligand contact to Mg(2+). Residues Thr243, Ile245, and Thr248 each coordinate K(+). Mg(2+) is bound at residue Thr249. Lys450 is a (6S)-5-formyl-5,6,7,8-tetrahydrofolate binding site.

Belongs to the TRAFAC class TrmE-Era-EngA-EngB-Septin-like GTPase superfamily. TrmE GTPase family. In terms of assembly, homodimer. Heterotetramer of two MnmE and two MnmG subunits. Requires K(+) as cofactor.

Its subcellular location is the cytoplasm. Functionally, exhibits a very high intrinsic GTPase hydrolysis rate. Involved in the addition of a carboxymethylaminomethyl (cmnm) group at the wobble position (U34) of certain tRNAs, forming tRNA-cmnm(5)s(2)U34. The protein is tRNA modification GTPase MnmE of Francisella tularensis subsp. holarctica (strain FTNF002-00 / FTA).